We begin with the raw amino-acid sequence, 349 residues long: Microbial Terpene synthase-like protein 1 (349 aa).

Mg(2+) is bound by residues Asp-98, Asp-102, Asn-243, and Ser-247. Positions 98–102 match the DDXXD motif motif; it reads DDILD.

Belongs to the terpene synthase family. Requires Mg(2+) as cofactor.

It participates in secondary metabolite biosynthesis; terpenoid biosynthesis. In terms of biological role, sesquiterpene synthase converting farnesyl diphosphate to six sesquiterpenes, with beta-elemene, delta-cadinene and an unidentified oxygenated sesquiterpene as the major products. Has no diterpene synthase activity. The chain is Microbial Terpene synthase-like protein 1 from Selaginella moellendorffii (Spikemoss).